We begin with the raw amino-acid sequence, 457 residues long: Methylenetetrahydrofolate--tRNA-(uracil-5-)-methyltransferase TrmFO (457 aa).

FAD is bound at residue 7–12 (GAGLAG). Residues 38 to 58 (FTSRQDEKTGTHDVRNATQTR) form a disordered region. Basic and acidic residues predominate over residues 40-52 (SRQDEKTGTHDVR).

The protein belongs to the MnmG family. TrmFO subfamily. FAD serves as cofactor.

It localises to the cytoplasm. It carries out the reaction uridine(54) in tRNA + (6R)-5,10-methylene-5,6,7,8-tetrahydrofolate + NADH + H(+) = 5-methyluridine(54) in tRNA + (6S)-5,6,7,8-tetrahydrofolate + NAD(+). It catalyses the reaction uridine(54) in tRNA + (6R)-5,10-methylene-5,6,7,8-tetrahydrofolate + NADPH + H(+) = 5-methyluridine(54) in tRNA + (6S)-5,6,7,8-tetrahydrofolate + NADP(+). Its function is as follows. Catalyzes the folate-dependent formation of 5-methyl-uridine at position 54 (M-5-U54) in all tRNAs. This is Methylenetetrahydrofolate--tRNA-(uracil-5-)-methyltransferase TrmFO from Hydrogenobaculum sp. (strain Y04AAS1).